The following is a 247-amino-acid chain: Fibroblast growth factor 14 (247 aa).

Disordered stretches follow at residues 1 to 38 (MAAA…KNRG) and 214 to 247 (VGET…SKTT). Over residues 15–25 (QAREQHWDRPS) the composition is skewed to basic and acidic residues.

It belongs to the heparin-binding growth factors family. As to quaternary structure, interacts with SCN8A. Nervous system.

It localises to the nucleus. In terms of biological role, probably involved in nervous system development and function. The protein is Fibroblast growth factor 14 (FGF14) of Homo sapiens (Human).